We begin with the raw amino-acid sequence, 182 residues long: Large ribosomal subunit protein bL25 (182 aa).

It belongs to the bacterial ribosomal protein bL25 family. CTC subfamily. As to quaternary structure, part of the 50S ribosomal subunit; part of the 5S rRNA/L5/L18/L25 subcomplex. Contacts the 5S rRNA. Binds to the 5S rRNA independently of L5 and L18.

This is one of the proteins that binds to the 5S RNA in the ribosome where it forms part of the central protuberance. The sequence is that of Large ribosomal subunit protein bL25 from Borrelia garinii subsp. bavariensis (strain ATCC BAA-2496 / DSM 23469 / PBi) (Borreliella bavariensis).